We begin with the raw amino-acid sequence, 651 residues long: Polyadenylate-binding protein 1 (651 aa).

Low complexity predominate over residues 1–27 (MSSTESPVPAAAAPAEAVPASTPAPAA). A disordered region spans residues 1–42 (MSSTESPVPAAAAPAEAVPASTPAPAAEQPAVGNGEQRNNAD). 4 RRM domains span residues 47-125 (TSLY…WSQR), 135-211 (GNIF…HHIP), 227-304 (TNVY…RAQK), and 330-407 (VNLY…LAQR). Disordered regions lie at residues 481 to 554 (QPGQ…EADQ) and 632 to 651 (QNDSAGAEAEANAEAPKTEA). A compositionally biased stretch (pro residues) spans 529 to 540 (AGQPVPGQPMPR). One can recognise a PABC domain in the interval 555 to 632 (PGALTAAALA…ALEVLKEYQQ (78 aa)). Residues 636 to 651 (AGAEAEANAEAPKTEA) are compositionally biased toward low complexity.

This sequence belongs to the polyadenylate-binding protein type-1 family. As to quaternary structure, part of large ribonucleoprotein complexes (mRNPs) containing RNA-binding proteins RRM4 and PAB1, endosome-binding protein UPA1, core scaffold protein UPA2 and associated factor GRP1. Interacts (via PABC domain) with UPA1 (via PAM2 domain). Interacts (via PABC domain) with UPA2 (via PAM2 domains).

It is found in the cytoplasm. Its subcellular location is the cytoskeleton. It localises to the endosome. In terms of biological role, RNA-binding protein involved in the formation of polar-growing hyphae which is essential for infection by the plant pathogen. Component of endosomal mRNA transport that regulates polarity of the infectious hyphae by transporting a broad spectrum of cargo mRNAs from the nucleus to cell poles. In Mycosarcoma maydis (Corn smut fungus), this protein is Polyadenylate-binding protein 1.